Consider the following 604-residue polypeptide: Elongation factor 4 (604 aa).

The 183-residue stretch at Ser7 to Ser189 folds into the tr-type G domain. GTP is bound by residues Asp19–Thr24 and Asn136–Asp139.

Belongs to the TRAFAC class translation factor GTPase superfamily. Classic translation factor GTPase family. LepA subfamily.

Its subcellular location is the cell inner membrane. The enzyme catalyses GTP + H2O = GDP + phosphate + H(+). Functionally, required for accurate and efficient protein synthesis under certain stress conditions. May act as a fidelity factor of the translation reaction, by catalyzing a one-codon backward translocation of tRNAs on improperly translocated ribosomes. Back-translocation proceeds from a post-translocation (POST) complex to a pre-translocation (PRE) complex, thus giving elongation factor G a second chance to translocate the tRNAs correctly. Binds to ribosomes in a GTP-dependent manner. The sequence is that of Elongation factor 4 from Synechococcus sp. (strain ATCC 27144 / PCC 6301 / SAUG 1402/1) (Anacystis nidulans).